A 120-amino-acid polypeptide reads, in one-letter code: Ribosome-binding factor A (120 aa).

This sequence belongs to the RbfA family. Monomer. Binds 30S ribosomal subunits, but not 50S ribosomal subunits or 70S ribosomes.

The protein resides in the cytoplasm. In terms of biological role, one of several proteins that assist in the late maturation steps of the functional core of the 30S ribosomal subunit. Associates with free 30S ribosomal subunits (but not with 30S subunits that are part of 70S ribosomes or polysomes). Required for efficient processing of 16S rRNA. May interact with the 5'-terminal helix region of 16S rRNA. The polypeptide is Ribosome-binding factor A (Limosilactobacillus fermentum (strain NBRC 3956 / LMG 18251) (Lactobacillus fermentum)).